Consider the following 27-residue polypeptide: Secretin (27 aa).

Methionine 27 bears the Methionine amide mark.

Belongs to the glucagon family.

It localises to the secreted. Its function is as follows. Hormone involved in different processes, such as regulation of the pH of the duodenal content, food intake and water homeostasis. Exerts its biological effects by binding to secretin receptor (SCTR), a G-protein coupled receptor expressed in the basolateral domain of several cells. The protein is Secretin of Gallus gallus (Chicken).